The primary structure comprises 389 residues: Alanine racemase TOXG (389 aa).

The residue at position 235 (Lys235) is an N6-(pyridoxal phosphate)lysine.

It belongs to the threonine aldolase family. Requires pyridoxal 5'-phosphate as cofactor.

It carries out the reaction L-alanine = D-alanine. Its pathway is mycotoxin biosynthesis; HC-toxin biosynthesis. In terms of biological role, alanine racemase, part of the diffuse TOX2 gene cluster that mediates the biosynthesis of the HC-toxin, cyclic tetrapeptide of structure cyclo(D-Pro-L-Ala-D-Ala-L-Aeo), where Aeo stands for 2-amino-9,10-epoxi-8-oxodecanoic acid. HC-toxin is a determinant of specificity and virulence in the interaction between the producing fungus and its host, maize. TOXG catalyzes the conversion of L-alanine into D-alanine, an essential precursor for the production of the major forms of HC-toxin by the non-ribosomal peptide synthetase HTS1. The protein is Alanine racemase TOXG of Cochliobolus carbonum (Maize leaf spot fungus).